The primary structure comprises 198 residues: Na(+)-translocating NADH-quinone reductase subunit E (198 aa).

Helical transmembrane passes span 11–31 (SVFI…FLAV), 35–55 (VSTA…SVPV), 77–97 (FLNF…LEMI), 110–130 (GIFL…SFMV), 140–160 (IVYG…LAGI), and 176–196 (LGIT…FSGV).

The protein belongs to the NqrDE/RnfAE family. Composed of six subunits; NqrA, NqrB, NqrC, NqrD, NqrE and NqrF.

The protein localises to the cell inner membrane. It carries out the reaction a ubiquinone + n Na(+)(in) + NADH + H(+) = a ubiquinol + n Na(+)(out) + NAD(+). Its function is as follows. NQR complex catalyzes the reduction of ubiquinone-1 to ubiquinol by two successive reactions, coupled with the transport of Na(+) ions from the cytoplasm to the periplasm. NqrA to NqrE are probably involved in the second step, the conversion of ubisemiquinone to ubiquinol. This chain is Na(+)-translocating NADH-quinone reductase subunit E, found in Histophilus somni (strain 2336) (Haemophilus somnus).